A 248-amino-acid chain; its full sequence is Probable aquaporin TIP2-2 (248 aa).

Helical transmembrane passes span 21–41 (AYVA…GSAI) and 55–75 (AGLV…VAIG). The NPA 1 signature appears at 84–86 (NPA). 3 helical membrane-spanning segments follow: residues 87–109 (VTFG…WIAQ), 133–153 (LSGV…FGLV), and 168–188 (LGTI…LVAG). The NPA 2 motif lies at 196-198 (NPA). The helical transmembrane segment at 210–230 (YTNIWIYWVGPLVGGGLAGLV) threads the bilayer.

This sequence belongs to the MIP/aquaporin (TC 1.A.8) family. TIP (TC 1.A.8.10) subfamily. In terms of tissue distribution, expressed in roots and leaves.

It is found in the vacuole membrane. Aquaporins facilitate the transport of water and small neutral solutes across cell membranes. May be involved in transport from the vacuolar compartment to the cytoplasm. This chain is Probable aquaporin TIP2-2 (TIP2-2), found in Oryza sativa subsp. japonica (Rice).